The primary structure comprises 685 residues: tRNA 5-methylaminomethyl-2-thiouridine biosynthesis bifunctional protein MnmC (685 aa).

Positions Met1–Gln272 are tRNA (mnm(5)s(2)U34)-methyltransferase. The interval Ile278 to Leu685 is FAD-dependent cmnm(5)s(2)U34 oxidoreductase.

The protein in the N-terminal section; belongs to the methyltransferase superfamily. tRNA (mnm(5)s(2)U34)-methyltransferase family. This sequence in the C-terminal section; belongs to the DAO family. It depends on FAD as a cofactor.

It localises to the cytoplasm. The enzyme catalyses 5-aminomethyl-2-thiouridine(34) in tRNA + S-adenosyl-L-methionine = 5-methylaminomethyl-2-thiouridine(34) in tRNA + S-adenosyl-L-homocysteine + H(+). In terms of biological role, catalyzes the last two steps in the biosynthesis of 5-methylaminomethyl-2-thiouridine (mnm(5)s(2)U) at the wobble position (U34) in tRNA. Catalyzes the FAD-dependent demodification of cmnm(5)s(2)U34 to nm(5)s(2)U34, followed by the transfer of a methyl group from S-adenosyl-L-methionine to nm(5)s(2)U34, to form mnm(5)s(2)U34. The polypeptide is tRNA 5-methylaminomethyl-2-thiouridine biosynthesis bifunctional protein MnmC (Shewanella baltica (strain OS185)).